A 120-amino-acid polypeptide reads, in one-letter code: NSSSVPLHGFHVHALGDTTNGCMSTGPHFNPTGKEHGAPQDENRHAGDLGNITAGADGVANVNVSDSQIPLTGAHSIIGRAVVVHADPDDLGKGGHELSKTTGNSNSSMDSCAHGIQGIL.

Cu cation-binding residues include His11, His13, and His28. Residues 16–52 (GDTTNGCMSTGPHFNPTGKEHGAPQDENRHAGDLGNI) are disordered. Cys22 and Cys112 are oxidised to a cystine. 4 residues coordinate Zn(2+): His28, His36, His45, and Asp48. Basic and acidic residues predominate over residues 33 to 47 (GKEHGAPQDENRHAG). Position 85 (His85) interacts with Cu cation.

It belongs to the Cu-Zn superoxide dismutase family. In terms of assembly, homodimer. Cu cation serves as cofactor. The cofactor is Zn(2+).

Its subcellular location is the cytoplasm. The enzyme catalyses 2 superoxide + 2 H(+) = H2O2 + O2. Destroys radicals which are normally produced within the cells and which are toxic to biological systems. This is Superoxide dismutase [Cu-Zn] (sodC) from Aspergillus japonicus.